The primary structure comprises 392 residues: Major outer membrane protein P.IA (392 aa).

The first 19 residues, Met-1–Ala-19, serve as a signal peptide directing secretion.

It belongs to the Gram-negative porin family. Homotrimer.

It localises to the cell outer membrane. Serves as a slightly cation selective porin. Major antigen on the gonococcal cell surface and it may have pathogenic properties in addition to its porin activity. This Neisseria meningitidis serogroup B (strain ATCC BAA-335 / MC58) protein is Major outer membrane protein P.IA (porA).